The following is a 326-amino-acid chain: MQTNLLKPKIISVEALTANQAKVVMEPFERGYGHTLGNALRRVLLSSMVGYAPTEVAIAGVVHEYSTLDGVQEDVVNLLLNLKGIVFKLQSRDEVIINLRKEGPGVVTAKDIDLPHDVEIMNPDHVIAHLSAGGKLDMQIKVEKGRGYVPGNVRQYNDEATKIIGHIVLDASFSPVSRVSYAVESARVEQRTDLDRLVMTIETNGVLSPEEAIRQAASILVDQLVVFAALESSEVSGDLAPSRSSMVDPMLMRPVDDLELTVRSANCLKAENIYYIGDLIQRTENELLKTPNLGRKSLNEIKDVLAARGLSLGMKLESWPPANLEK.

The tract at residues 1 to 231 (MQTNLLKPKI…DQLVVFAALE (231 aa)) is alpha N-terminal domain (alpha-NTD). An alpha C-terminal domain (alpha-CTD) region spans residues 247–326 (VDPMLMRPVD…ESWPPANLEK (80 aa)).

It belongs to the RNA polymerase alpha chain family. Homodimer. The RNAP catalytic core consists of 2 alpha, 1 beta, 1 beta' and 1 omega subunit. When a sigma factor is associated with the core the holoenzyme is formed, which can initiate transcription.

It catalyses the reaction RNA(n) + a ribonucleoside 5'-triphosphate = RNA(n+1) + diphosphate. Its function is as follows. DNA-dependent RNA polymerase catalyzes the transcription of DNA into RNA using the four ribonucleoside triphosphates as substrates. In Polynucleobacter necessarius subsp. necessarius (strain STIR1), this protein is DNA-directed RNA polymerase subunit alpha.